A 219-amino-acid polypeptide reads, in one-letter code: Transmembrane emp24 domain-containing protein 10 (219 aa).

A signal peptide spans 1-31 (MSGLSGPLSWPGPLLSALLFLFLLGPSSVLG). The tract at residues 1–142 (MSGLSGPLSW…KNYEEIAKVE (142 aa)) is required for interaction with STX17. Residues 32–185 (ISFHLPVNSR…RDTNESTNTR (154 aa)) are Lumenal-facing. Positions 41–193 (RKCLREEIHK…TRVLYFSIFS (153 aa)) constitute a GOLD domain. The segment at 147–178 (LEVELRRLEDLSESIVNDFAYMKKREEEMRDT) is required for TMED10 and TMED2 cis-Golgi network localization. Arg-171 and Arg-176 each carry dimethylated arginine. A glycan (N-linked (GlcNAc...) asparagine) is linked at Asn-179. A helical membrane pass occupies residues 186-206 (VLYFSIFSMFCLIGLATWQVF). Positions 204-219 (QVFYLRRFFKAKKLIE) are interaction with COPG1. Residues 207 to 219 (YLRRFFKAKKLIE) are Cytoplasmic-facing. The interval 207-219 (YLRRFFKAKKLIE) is interaction with ARF1 and IL1B. The COPII vesicle coat-binding motif lies at 211–212 (FF). Positions 211–219 (FFKAKKLIE) match the COPI vesicle coat-binding motif.

It belongs to the EMP24/GP25L family. Predominantly dimeric and to a lesser extent monomeric in the ER. Monomer and dimer in ERGIC and cis-Golgi network. Forms homooligomer (via GOLD domain); the assembly is promoted by direct binding with leaderless cargos and may form a protein channel that facilitates cargo entry into the ERGIC. Forms heterooligomeric complexes with other members of the p24 family such as TMED2, TMED7 and TMED9. Interacts (via GOLD domain) with TMED2 (via GOLD domain); the complex is required for export of TMED10 from the ER to the cis-Golgi network; the complex is proposed to be involved in cis-Golgi network dynamics and / or biogenesis. Associates with the COPI vesicle coat subunits (coatomer). Tetramerization of the cytoplasmic domain at the Golgi membrane in vitro; the complex is proposed to interact with COPI coatomer and induce budding of the vesicles. Interacts with COPG1; the interaction involves TMED10 homodimer. Interacts with ARF1 (GDP-bound); the interaction probably involves a TMED10 oligomer. Interacts with SEC23A, SEC24B, SEC24C and SEC24D components of the coat protein complex II/COPII, indicative of an association of TMED10 with the COPII vesicle coat. Interacts with CD59. Interacts with MPPE1/PGAP5; the complex might recruit and sort GPI-anchored proteins to the ER-exit site, or the interaction might lead to recycling of PGAP5 between the ER and the Golgi. Interacts with F2LR1/PAR2. Interacts with KDELR2/ERD2; the interaction is disrupted by KDELR2 ligand. Found in a complex composed at least of SURF4, TMED2 and TMED10. Associates with the presenilin-dependent gamma-secretase complex. Interacts with STX17; the interaction is direct. Interacts with IL-1; the interaction is direct. Interacts with RAB21 (active GTP-bound form); the interaction is indirect and regulates TMED10 abundance and localization at the Golgi. As to expression, ubiquitous.

Its subcellular location is the endoplasmic reticulum membrane. It is found in the endoplasmic reticulum-Golgi intermediate compartment membrane. The protein localises to the golgi apparatus membrane. The protein resides in the golgi apparatus. It localises to the cis-Golgi network membrane. Its subcellular location is the trans-Golgi network membrane. It is found in the cytoplasmic vesicle. The protein localises to the secretory vesicle membrane. The protein resides in the cell membrane. It localises to the melanosome. In terms of biological role, cargo receptor involved in protein vesicular trafficking and quality control in the endoplasmic reticulum (ER) and Golgi. The p24 protein family is a group of transmembrane proteins that bind coat protein complex I/COPI and coat protein complex II/COPII involved in vesicular trafficking between the membranes. Acts at the lumenal side for incorporation of secretory cargo molecules into transport vesicles and involved in vesicle coat formation at the cytoplasmic side. Mainly functions in the early secretory pathway and cycles between the ER, ER-Golgi intermediate compartment (ERGIC) and Golgi, mediating cargo transport through COPI and COPII-coated vesicles. In COPII vesicle-mediated anterograde transport, involved in the transport of GPI-anchored proteins by acting together with TMED2 as their cargo receptor; the function specifically implies SEC24C and SEC24D of the COPII vesicle coat and lipid raft-like microdomains of the ER. Recognizes GPI anchors structural remodeled in the ER by the GPI inositol-deacylase/PGAP1 and the metallophosphoesterase MPPE1/PGAP5. In COPI vesicle-mediated retrograde transport, involved in the biogenesis of COPI vesicles and vesicle coat recruitment. Involved in trafficking of amyloid beta A4 protein and soluble APP-beta release (independent from the modulation of gamma-secretase activity). Involved in the KDELR2-mediated retrograde transport of the toxin A subunit (CTX-A-K63)together with COPI and the COOH terminus of KDELR2. On Golgi membranes, acts as a primary receptor for ARF1-GDP, a GTP-binding protein involved in COPI-vesicle formation. Increases coatomer-dependent GTPase-activating activity of ARFGAP2 which mediates the hydrolysis of ARF1-bound GTP and therefore modulates protein trafficking from the Golgi apparatus. Involved in the exocytic trafficking of G protein-coupled receptors F2LR1/PAR2 (trypsin and tryspin-like enzyme receptor), OPRM1 (opioid receptor) and P2RY4 (UTD and UDP receptor) from the Golgi to the plasma membrane, thus contributing to receptor resensitization. In addition to its cargo receptor activity, may also act as a protein channel after oligomerization, facilitating the post-translational entry of leaderless cytoplasmic cargo into the ERGIC. Involved in the translocation into ERGIC, the vesicle entry and the secretion of leaderless cargos (lacking the secretion signal sequence), including the mature form of interleukin 1/IL-1 family members, the alpha-crystallin B chain HSPB5, the carbohydrate-binding proteins galectin-1/LGALS1 and galectin-3/LGALS3, the microtubule-associated protein Tau/MAPT, and the annexin A1/ANXA1; the translocation process is dependent on cargo protein unfolding and enhanced by chaperones HSP90AB1 and HSP90B1/GRP9. Could also associates with the presenilin-dependent gamma-secretase complex in order to regulate gamma-cleavages of the amyloid beta A4 protein to yield amyloid-beta 40/Abeta40. This chain is Transmembrane emp24 domain-containing protein 10, found in Rattus norvegicus (Rat).